A 37-amino-acid polypeptide reads, in one-letter code: Photosystem II reaction center protein T (37 aa).

Residues 3-23 traverse the membrane as a helical segment; sequence ALVYTFLLVSTLGILFFAIFF.

This sequence belongs to the PsbT family. PSII is composed of 1 copy each of membrane proteins PsbA, PsbB, PsbC, PsbD, PsbE, PsbF, PsbH, PsbI, PsbJ, PsbK, PsbL, PsbM, PsbT, PsbY, PsbZ, Psb30/Ycf12, at least 3 peripheral proteins of the oxygen-evolving complex and a large number of cofactors. It forms dimeric complexes.

The protein localises to the plastid. Its subcellular location is the chloroplast thylakoid membrane. Found at the monomer-monomer interface of the photosystem II (PS II) dimer, plays a role in assembly and dimerization of PSII. PSII is a light-driven water plastoquinone oxidoreductase, using light energy to abstract electrons from H(2)O, generating a proton gradient subsequently used for ATP formation. The sequence is that of Photosystem II reaction center protein T from Ephedra sinica (Chinese ephedra).